The sequence spans 487 residues: Arginine ADP-riboxanase OspC3 (487 aa).

Polar residues predominate over residues 1–14; the sequence is MRVETHSPSFTNPN. Residues 1 to 41 form a disordered region; the sequence is MRVETHSPSFTNPNPAEACSGDPTEMGSRLSGVSRAPLPHA. NAD(+) contacts are provided by histidine 137, glutamine 138, serine 139, serine 164, asparagine 167, and threonine 168. Residue glutamate 325 is part of the active site. ANK repeat units follow at residues 368 to 398 and 444 to 473; these read DAVT…EAKD and RGDT…DRNL.

Belongs to the OspC family.

The protein resides in the secreted. It localises to the host cytoplasm. It catalyses the reaction L-arginyl-[protein] + NAD(+) = ADP-riboxanated L-argininyl-[protein] + nicotinamide + NH4(+) + H(+). Functionally, ADP-riboxanase effector that inhibits host cell pyroptosis. Acts by mediating arginine ADP-riboxanation of host CASP4/CASP11, blocking CASP4/CASP11 autoprocessing. This prevents CASP4 activation and ability to recognize and cleave GSDMD, thereby inhibiting LPS-induced pyroptosis. ADP-riboxanation takes place in two steps: OspC3 first catalyzes ADP-ribosylation of target Arg, and then initiates a deamination to remove one N-omega group. The protein is Arginine ADP-riboxanase OspC3 of Chromobacterium sp. (strain ATCC 53434 / SC 14030).